A 667-amino-acid chain; its full sequence is Smc-like protein Sph2 (667 aa).

Coiled coils occupy residues 153-295 (GSIQ…SLAT) and 355-517 (GRLD…AITA).

This sequence belongs to the Sph1/Sph2 family.

The protein resides in the cytoplasm. Functionally, may play a role in replication. The chain is Smc-like protein Sph2 (sph2) from Halobacterium salinarum (strain ATCC 29341 / DSM 671 / R1).